The sequence spans 499 residues: uncharacterized protein (499 aa).

Residues Cys-10–Arg-57 form an RING-type; degenerate zinc finger. The B box-type; degenerate zinc finger occupies Asn-101–Ile-147.

This is an uncharacterized protein from Caenorhabditis elegans.